The chain runs to 157 residues: Ribosome maturation factor RimP (157 aa).

The protein belongs to the RimP family.

Its subcellular location is the cytoplasm. Functionally, required for maturation of 30S ribosomal subunits. This is Ribosome maturation factor RimP from Ligilactobacillus salivarius (strain UCC118) (Lactobacillus salivarius).